Reading from the N-terminus, the 228-residue chain is MATWANLGLQNSSSPLMEQLNFFHDHTVLILIMITVMITYVMGMLFFNKFTNRYLLHGQTIEIIWTILPAIILMFIAFPSLRLLYLLDEINSPLITLKAIGHQWYWSYEYSNFMNLEFDSYMIPTNELDLNGFRLLDVDNRIILPLNNQIRILVTATDVLHSWTVPSLGVKIDATPGRLNQTNFLINQSGLFFGQCSEICGANHSFMPIVIESIPMNYFIKWVSSQLN.

Over 1–26 (MATWANLGLQNSSSPLMEQLNFFHDH) the chain is Mitochondrial intermembrane. The helical transmembrane segment at 27–48 (TVLILIMITVMITYVMGMLFFN) threads the bilayer. Over 49–62 (KFTNRYLLHGQTIE) the chain is Mitochondrial matrix. The chain crosses the membrane as a helical span at residues 63–82 (IIWTILPAIILMFIAFPSLR). Over 83-228 (LLYLLDEINS…FIKWVSSQLN (146 aa)) the chain is Mitochondrial intermembrane. His-161, Cys-196, Glu-198, Cys-200, His-204, and Met-207 together coordinate Cu cation. Glu-198 contacts Mg(2+).

The protein belongs to the cytochrome c oxidase subunit 2 family. In terms of assembly, component of the cytochrome c oxidase (complex IV, CIV), a multisubunit enzyme composed of a catalytic core of 3 subunits and several supernumerary subunits. The complex exists as a monomer or a dimer and forms supercomplexes (SCs) in the inner mitochondrial membrane with ubiquinol-cytochrome c oxidoreductase (cytochrome b-c1 complex, complex III, CIII). Cu cation is required as a cofactor.

Its subcellular location is the mitochondrion inner membrane. The catalysed reaction is 4 Fe(II)-[cytochrome c] + O2 + 8 H(+)(in) = 4 Fe(III)-[cytochrome c] + 2 H2O + 4 H(+)(out). Its function is as follows. Component of the cytochrome c oxidase, the last enzyme in the mitochondrial electron transport chain which drives oxidative phosphorylation. The respiratory chain contains 3 multisubunit complexes succinate dehydrogenase (complex II, CII), ubiquinol-cytochrome c oxidoreductase (cytochrome b-c1 complex, complex III, CIII) and cytochrome c oxidase (complex IV, CIV), that cooperate to transfer electrons derived from NADH and succinate to molecular oxygen, creating an electrochemical gradient over the inner membrane that drives transmembrane transport and the ATP synthase. Cytochrome c oxidase is the component of the respiratory chain that catalyzes the reduction of oxygen to water. Electrons originating from reduced cytochrome c in the intermembrane space (IMS) are transferred via the dinuclear copper A center (CU(A)) of subunit 2 and heme A of subunit 1 to the active site in subunit 1, a binuclear center (BNC) formed by heme A3 and copper B (CU(B)). The BNC reduces molecular oxygen to 2 water molecules using 4 electrons from cytochrome c in the IMS and 4 protons from the mitochondrial matrix. This is Cytochrome c oxidase subunit 2 (COII) from Culex quinquefasciatus (Southern house mosquito).